A 106-amino-acid chain; its full sequence is MLVLTTETIPGKGIKEVKGLVKGSTVRCKNIGKDIASSFKNLVGGEMNSYTEILTEARQIAIGRMVDEAESLGANAIIEMRLVSSSLAAGAAEMVAYGTAVIYEDA.

This sequence belongs to the UPF0145 family.

The protein is UPF0145 protein CPE0882 of Clostridium perfringens (strain 13 / Type A).